Here is a 322-residue protein sequence, read N- to C-terminus: UDP-N-acetylenolpyruvoylglucosamine reductase (322 aa).

The 167-residue stretch at 36-202 (RAGGPAQVLF…TSVLFEGVPG (167 aa)) folds into the FAD-binding PCMH-type domain. The active site involves arginine 182. Serine 231 serves as the catalytic Proton donor. Glutamate 301 is a catalytic residue.

This sequence belongs to the MurB family. Requires FAD as cofactor.

Its subcellular location is the cytoplasm. It carries out the reaction UDP-N-acetyl-alpha-D-muramate + NADP(+) = UDP-N-acetyl-3-O-(1-carboxyvinyl)-alpha-D-glucosamine + NADPH + H(+). It participates in cell wall biogenesis; peptidoglycan biosynthesis. In terms of biological role, cell wall formation. The polypeptide is UDP-N-acetylenolpyruvoylglucosamine reductase (Brucella abortus (strain S19)).